The chain runs to 509 residues: UDP-N-acetylmuramoyl-L-alanyl-D-glutamate--2,6-diaminopimelate ligase (509 aa).

S30 is a binding site for UDP-N-acetyl-alpha-D-muramoyl-L-alanyl-D-glutamate. An ATP-binding site is contributed by 110 to 116 (GTNGKTT). Residues 152-153 (TT), S179, Q185, and R187 each bind UDP-N-acetyl-alpha-D-muramoyl-L-alanyl-D-glutamate. K219 carries the post-translational modification N6-carboxylysine. Meso-2,6-diaminopimelate-binding positions include R385, 409–412 (DNPR), G476, and E480. A Meso-diaminopimelate recognition motif motif is present at residues 409-412 (DNPR).

The protein belongs to the MurCDEF family. MurE subfamily. It depends on Mg(2+) as a cofactor. In terms of processing, carboxylation is probably crucial for Mg(2+) binding and, consequently, for the gamma-phosphate positioning of ATP.

The protein localises to the cytoplasm. The catalysed reaction is UDP-N-acetyl-alpha-D-muramoyl-L-alanyl-D-glutamate + meso-2,6-diaminopimelate + ATP = UDP-N-acetyl-alpha-D-muramoyl-L-alanyl-gamma-D-glutamyl-meso-2,6-diaminopimelate + ADP + phosphate + H(+). It functions in the pathway cell wall biogenesis; peptidoglycan biosynthesis. Functionally, catalyzes the addition of meso-diaminopimelic acid to the nucleotide precursor UDP-N-acetylmuramoyl-L-alanyl-D-glutamate (UMAG) in the biosynthesis of bacterial cell-wall peptidoglycan. This is UDP-N-acetylmuramoyl-L-alanyl-D-glutamate--2,6-diaminopimelate ligase from Geobacter sulfurreducens (strain ATCC 51573 / DSM 12127 / PCA).